The following is a 700-amino-acid chain: ABC transporter B family member 26, chloroplastic (700 aa).

The N-terminal 59 residues, 1 to 59 (MAQQVLGCTSRPIRVSLHRCSVITTSDTIRRKNLRFVRNPRLSFSLQSSTRNYRLPSIN), are a transit peptide targeting the chloroplast. A run of 3 helical transmembrane segments spans residues 137 to 157 (WVIF…ITIP), 182 to 202 (LVTL…FFGI), and 268 to 288 (LIYL…ICCI). The ABC transmembrane type-1 domain occupies 139–421 (IFAAFSTLIV…VGDNLSSLMQ (283 aa)). Positions 455-694 (IEFVDVSFSY…DGLYARLTKR (240 aa)) constitute an ABC transporter domain. 490–497 (GLSGSGKS) is an ATP binding site.

It belongs to the ABC transporter superfamily. ABCB family. Multidrug resistance exporter (TC 3.A.1.201) subfamily.

The protein resides in the plastid. It is found in the chloroplast membrane. This is ABC transporter B family member 26, chloroplastic (ABCB26) from Arabidopsis thaliana (Mouse-ear cress).